The primary structure comprises 273 residues: MNNRVHQGHLARKRFGQNFLNDRFVIDSIVSAINPQKGQAMVEIGPGLAALTEPVGERLDKLTVIELDRDLAARLQTHPFLGPKLTIYQQDAMTMNFGELSAQLGQPLRVFGNLPYNISTPLMFHLFSYTDAIADMHFMLQKEVVNRLVAGPNSKAYGRLSVMAQYYCQVIPVLEVPPSAFTPPPKVDSAVVRLVPHATMPYPVKDIRVLSRITTEAFNQRRKTIRNSLGNLFSVETLTEMGIDPAMRAENISVAQYCQMANYLSENAPLKES.

The S-adenosyl-L-methionine site is built by Asn-18, Leu-20, Gly-45, Glu-66, Asp-91, and Asn-113.

It belongs to the class I-like SAM-binding methyltransferase superfamily. rRNA adenine N(6)-methyltransferase family. RsmA subfamily.

It is found in the cytoplasm. It catalyses the reaction adenosine(1518)/adenosine(1519) in 16S rRNA + 4 S-adenosyl-L-methionine = N(6)-dimethyladenosine(1518)/N(6)-dimethyladenosine(1519) in 16S rRNA + 4 S-adenosyl-L-homocysteine + 4 H(+). In terms of biological role, specifically dimethylates two adjacent adenosines (A1518 and A1519) in the loop of a conserved hairpin near the 3'-end of 16S rRNA in the 30S particle. May play a critical role in biogenesis of 30S subunits. This is Ribosomal RNA small subunit methyltransferase A from Salmonella agona (strain SL483).